A 307-amino-acid polypeptide reads, in one-letter code: Nicotinamide/nicotinic acid mononucleotide adenylyltransferase 2 (307 aa).

NAD(+) contacts are provided by S16 and F17. H24 lines the ATP pocket. NAD(+) is bound by residues W92 and T95. S-palmitoyl cysteine attachment occurs at residues C164 and C165. Positions 200, 202, 212, 213, and 232 each coordinate NAD(+). T271 to R274 contacts ATP.

Belongs to the eukaryotic NMN adenylyltransferase family. Monomer. Mg(2+) is required as a cofactor. Post-translationally, degraded in response to injured neurite. Degradation is caused by polyubiquitination by MYCBP2 after recognition by FBXO45. In terms of processing, palmitoylated; palmitoylation is required for membrane association.

Its subcellular location is the golgi apparatus membrane. It is found in the cytoplasmic vesicle membrane. It localises to the cytoplasm. The protein resides in the cell projection. The protein localises to the axon. It carries out the reaction beta-nicotinamide D-ribonucleotide + ATP + H(+) = diphosphate + NAD(+). The enzyme catalyses nicotinate beta-D-ribonucleotide + ATP + H(+) = deamido-NAD(+) + diphosphate. It functions in the pathway cofactor biosynthesis; NAD(+) biosynthesis; NAD(+) from nicotinamide D-ribonucleotide: step 1/1. It participates in cofactor biosynthesis; NAD(+) biosynthesis; deamido-NAD(+) from nicotinate D-ribonucleotide: step 1/1. Its activity is regulated as follows. Inhibited by P1-(adenosine-5')-P3-(nicotinamide-riboside-5')-triphosphate (Np3AD) and P1-(adenosine-5')-P4-(nicotinamide-riboside-5')-tetraphosphate (Np4AD). Functionally, nicotinamide/nicotinate-nucleotide adenylyltransferase that acts as an axon maintenance factor. Axon survival factor required for the maintenance of healthy axons: acts by delaying Wallerian axon degeneration, an evolutionarily conserved process that drives the loss of damaged axons. Catalyzes the formation of NAD(+) from nicotinamide mononucleotide (NMN) and ATP. Can also use the deamidated form; nicotinic acid mononucleotide (NaMN) as substrate but with a lower efficiency. Cannot use triazofurin monophosphate (TrMP) as substrate. Also catalyzes the reverse reaction, i.e. the pyrophosphorolytic cleavage of NAD(+). For the pyrophosphorolytic activity prefers NAD(+), NADH and NaAD as substrates and degrades nicotinic acid adenine dinucleotide phosphate (NHD) less effectively. Fails to cleave phosphorylated dinucleotides NADP(+), NADPH and NaADP(+). Also acts as an activator of ADP-ribosylation by supporting the catalytic activity of PARP16 and promoting mono-ADP-ribosylation of ribosomes by PARP16. May be involved in the maintenance of axonal integrity. This is Nicotinamide/nicotinic acid mononucleotide adenylyltransferase 2 (NMNAT2) from Bos taurus (Bovine).